Reading from the N-terminus, the 901-residue chain is Protein translocase subunit SecA (901 aa).

Residues Gln85, Gly103–Thr107, and Asp510 contribute to the ATP site. Residues Glu836–Met845 show a composition bias toward basic and acidic residues. Residues Glu836 to Gln901 form a disordered region. Polar residues predominate over residues Ile849–Ser866. Zn(2+) contacts are provided by Cys882, Cys884, Cys893, and His894. Residues Lys888–Gln901 show a composition bias toward basic residues.

This sequence belongs to the SecA family. Monomer and homodimer. Part of the essential Sec protein translocation apparatus which comprises SecA, SecYEG and auxiliary proteins SecDF-YajC and YidC. Zn(2+) serves as cofactor.

Its subcellular location is the cell inner membrane. The protein localises to the cytoplasm. The enzyme catalyses ATP + H2O + cellular proteinSide 1 = ADP + phosphate + cellular proteinSide 2.. Its function is as follows. Part of the Sec protein translocase complex. Interacts with the SecYEG preprotein conducting channel. Has a central role in coupling the hydrolysis of ATP to the transfer of proteins into and across the cell membrane, serving both as a receptor for the preprotein-SecB complex and as an ATP-driven molecular motor driving the stepwise translocation of polypeptide chains across the membrane. This chain is Protein translocase subunit SecA, found in Haemophilus influenzae (strain PittEE).